A 421-amino-acid polypeptide reads, in one-letter code: Histidine--tRNA ligase (421 aa).

This sequence belongs to the class-II aminoacyl-tRNA synthetase family. As to quaternary structure, homodimer.

The protein resides in the cytoplasm. The catalysed reaction is tRNA(His) + L-histidine + ATP = L-histidyl-tRNA(His) + AMP + diphosphate + H(+). The sequence is that of Histidine--tRNA ligase from Thermus thermophilus (strain ATCC BAA-163 / DSM 7039 / HB27).